The sequence spans 500 residues: Aspartyl/glutamyl-tRNA(Asn/Gln) amidotransferase subunit B (500 aa).

This sequence belongs to the GatB/GatE family. GatB subfamily. In terms of assembly, heterotrimer of A, B and C subunits.

The enzyme catalyses L-glutamyl-tRNA(Gln) + L-glutamine + ATP + H2O = L-glutaminyl-tRNA(Gln) + L-glutamate + ADP + phosphate + H(+). It catalyses the reaction L-aspartyl-tRNA(Asn) + L-glutamine + ATP + H2O = L-asparaginyl-tRNA(Asn) + L-glutamate + ADP + phosphate + 2 H(+). In terms of biological role, allows the formation of correctly charged Asn-tRNA(Asn) or Gln-tRNA(Gln) through the transamidation of misacylated Asp-tRNA(Asn) or Glu-tRNA(Gln) in organisms which lack either or both of asparaginyl-tRNA or glutaminyl-tRNA synthetases. The reaction takes place in the presence of glutamine and ATP through an activated phospho-Asp-tRNA(Asn) or phospho-Glu-tRNA(Gln). The chain is Aspartyl/glutamyl-tRNA(Asn/Gln) amidotransferase subunit B from Sinorhizobium medicae (strain WSM419) (Ensifer medicae).